The chain runs to 485 residues: N-succinylglutamate 5-semialdehyde dehydrogenase 2 (485 aa).

221 to 226 is a binding site for NAD(+); that stretch reads GSAAAG. Catalysis depends on residues Glu-244 and Cys-279.

It belongs to the aldehyde dehydrogenase family. AstD subfamily.

It catalyses the reaction N-succinyl-L-glutamate 5-semialdehyde + NAD(+) + H2O = N-succinyl-L-glutamate + NADH + 2 H(+). It functions in the pathway amino-acid degradation; L-arginine degradation via AST pathway; L-glutamate and succinate from L-arginine: step 4/5. In terms of biological role, catalyzes the NAD-dependent reduction of succinylglutamate semialdehyde into succinylglutamate. This is N-succinylglutamate 5-semialdehyde dehydrogenase 2 from Caulobacter vibrioides (strain ATCC 19089 / CIP 103742 / CB 15) (Caulobacter crescentus).